The sequence spans 1363 residues: Clustered mitochondria protein homolog (1363 aa).

TPR repeat units lie at residues 29–63 (LPSFFNVGDDYLTIPSSYEENIADLKQALNIIVLC) and 120–154 (KEKSYNLASIYEQISRFREVIGLHYIDRLSNDIGS). The interval 172–191 (KEAKKEESTEKEQQEKEELS) is disordered. Residues 283-316 (STINFNPTIKINEKGKFNKSYLLYDLVCQLSPLF) form a TPR 3 repeat. The region spanning 361-631 (DLSRSQLSSL…RTTPRDIEFI (271 aa)) is the Clu domain. A disordered region spans residues 521 to 544 (PVITSPTTDAEGKNEAEEPESEPV). The TPR 4 repeat unit spans residues 548–581 (VYGLSSDGSRILEDKSFEEPLKQIGDFFHLKPHK). Basic and acidic residues predominate over residues 799–832 (AKAEKKREEEKEKEEKEATESEDKKEKKEDKEDA). Positions 799 to 844 (AKAEKKREEEKEKEEKEATESEDKKEKKEDKEDAEKEEAEAEEEVP) are disordered. Residues 833–842 (EKEEAEAEEE) are compositionally biased toward acidic residues. TPR repeat units follow at residues 1057 to 1090 (VEEIYSNARSHLVQGNKEMGMALFNELLAINESI), 1141 to 1174 (ITAYMNSAYYESSNEQYLNSLKLYKEAMNTWSLV), 1183 to 1216 (INTLTNLSESLLKIKAYDSALELLQEALEITKKL), and 1225 to 1258 (GFIYYRIANIVVTLNKFKESKELFDKAYDIFMKL). Residues 1291–1363 (QQETQKKSKT…SGSKKSNKKK (73 aa)) form a disordered region. The segment covering 1330–1342 (PPQSNPEIANQSI) has biased composition (polar residues).

The protein belongs to the CLU family. May associate with the eukaryotic translation initiation factor 3 (eIF-3) complex.

It localises to the cytoplasm. Functionally, mRNA-binding protein involved in proper cytoplasmic distribution of mitochondria. This is Clustered mitochondria protein homolog from Candida albicans (strain SC5314 / ATCC MYA-2876) (Yeast).